Here is a 483-residue protein sequence, read N- to C-terminus: Salicylaldehyde dehydrogenase (483 aa).

228–233 (GSTRVG) is a binding site for NAD(+). Catalysis depends on residues glutamate 250 and cysteine 284.

The protein belongs to the aldehyde dehydrogenase family.

The enzyme catalyses salicylaldehyde + NAD(+) + H2O = salicylate + NADH + 2 H(+). It functions in the pathway aromatic compound metabolism; naphthalene degradation. This is Salicylaldehyde dehydrogenase (nahF) from Pseudomonas putida (Arthrobacter siderocapsulatus).